The following is a 101-amino-acid chain: Small ribosomal subunit protein uS14 (101 aa).

It belongs to the universal ribosomal protein uS14 family. In terms of assembly, part of the 30S ribosomal subunit. Contacts proteins S3 and S10.

Its function is as follows. Binds 16S rRNA, required for the assembly of 30S particles and may also be responsible for determining the conformation of the 16S rRNA at the A site. The protein is Small ribosomal subunit protein uS14 of Proteus mirabilis (strain HI4320).